A 303-amino-acid polypeptide reads, in one-letter code: Elongation factor Ts (303 aa).

The involved in Mg(2+) ion dislocation from EF-Tu stretch occupies residues Thr79–Thr82.

This sequence belongs to the EF-Ts family.

The protein localises to the cytoplasm. Associates with the EF-Tu.GDP complex and induces the exchange of GDP to GTP. It remains bound to the aminoacyl-tRNA.EF-Tu.GTP complex up to the GTP hydrolysis stage on the ribosome. The chain is Elongation factor Ts from Magnetococcus marinus (strain ATCC BAA-1437 / JCM 17883 / MC-1).